The following is a 474-amino-acid chain: ATP synthase subunit beta, chloroplastic (474 aa).

Residue 155-162 (GGAGVGKT) participates in ATP binding.

Belongs to the ATPase alpha/beta chains family. F-type ATPases have 2 components, CF(1) - the catalytic core - and CF(0) - the membrane proton channel. CF(1) has five subunits: alpha(3), beta(3), gamma(1), delta(1), epsilon(1). CF(0) has four main subunits: a(1), b(1), b'(1) and c(9-12).

The protein localises to the plastid. Its subcellular location is the chloroplast thylakoid membrane. It catalyses the reaction ATP + H2O + 4 H(+)(in) = ADP + phosphate + 5 H(+)(out). Functionally, produces ATP from ADP in the presence of a proton gradient across the membrane. The catalytic sites are hosted primarily by the beta subunits. In Thalassiosira pseudonana (Marine diatom), this protein is ATP synthase subunit beta, chloroplastic.